The chain runs to 232 residues: Beta-casein (232 aa).

The signal sequence occupies residues 1-15; sequence MKLLILACFVALALA. N22 carries N-linked (GlcNAc...) asparagine glycosylation. S24 is subject to Phosphoserine. T27 carries the phosphothreonine modification. S30, S32, S33, and S34 each carry phosphoserine. The span at 48-63 shows a compositional bias: basic and acidic residues; that stretch reads KLKREEQQQTENERQN. The disordered stretch occupies residues 48–74; that stretch reads KLKREEQQQTENERQNKIHQFPQPQPL.

The protein belongs to the beta-casein family. In terms of tissue distribution, mammary gland specific. Secreted in milk.

It is found in the secreted. Functionally, important role in determination of the surface properties of the casein micelles. The protein is Beta-casein (CSN2) of Sus scrofa (Pig).